The sequence spans 408 residues: LL-diaminopimelate aminotransferase (408 aa).

Residues Y15 and G42 each coordinate substrate. Pyridoxal 5'-phosphate-binding positions include Y72, 108 to 109, Y132, N187, Y218, and 246 to 248; these read SK and SFS. Substrate is bound by residues K109, Y132, and N187. The residue at position 249 (K249) is an N6-(pyridoxal phosphate)lysine. Residues R257 and N292 each coordinate pyridoxal 5'-phosphate. Substrate-binding residues include N292 and R388.

Belongs to the class-I pyridoxal-phosphate-dependent aminotransferase family. LL-diaminopimelate aminotransferase subfamily. As to quaternary structure, homodimer. The cofactor is pyridoxal 5'-phosphate.

The catalysed reaction is (2S,6S)-2,6-diaminopimelate + 2-oxoglutarate = (S)-2,3,4,5-tetrahydrodipicolinate + L-glutamate + H2O + H(+). The protein operates within amino-acid biosynthesis; L-lysine biosynthesis via DAP pathway; LL-2,6-diaminopimelate from (S)-tetrahydrodipicolinate (aminotransferase route): step 1/1. Involved in the synthesis of meso-diaminopimelate (m-DAP or DL-DAP), required for both lysine and peptidoglycan biosynthesis. Catalyzes the direct conversion of tetrahydrodipicolinate to LL-diaminopimelate. The chain is LL-diaminopimelate aminotransferase from Prochlorococcus marinus (strain MIT 9313).